A 203-amino-acid chain; its full sequence is MARFRGSITKVSRRLGVALAPKAEKYLGRRAYAPGQHGQSRKGKISEYALQLREKQKMKYIYGVLERQFRNYYKKAVSQRGVTGENLVKLLECRFDNVVFRAGFSPSRAGARQLVSHCHLRINGNKVNIPSYQVKPGDVIDFREKSRNMDAVRNSLNKTPDSRIPQWIQVDKANMKAVFLNVPERADIQEPYNEQLVVELYSK.

The region spanning 93–154 is the S4 RNA-binding domain; that stretch reads CRFDNVVFRA…KSRNMDAVRN (62 aa).

Belongs to the universal ribosomal protein uS4 family. In terms of assembly, part of the 30S ribosomal subunit. Contacts protein S5. The interaction surface between S4 and S5 is involved in control of translational fidelity.

Functionally, one of the primary rRNA binding proteins, it binds directly to 16S rRNA where it nucleates assembly of the body of the 30S subunit. In terms of biological role, with S5 and S12 plays an important role in translational accuracy. In Chloroherpeton thalassium (strain ATCC 35110 / GB-78), this protein is Small ribosomal subunit protein uS4.